Reading from the N-terminus, the 275-residue chain is Tryptase (275 aa).

An N-terminal signal peptide occupies residues 1–20 (MLNLLVLALPLLVSLVHTAP). The propeptide at 21 to 30 (APGQALERAG) is activation peptide. A Peptidase S1 domain is found at 31 to 272 (IVGGKEAPGH…YLDWIHQCIP (242 aa)). A disulfide bond links Cys-59 and Cys-75. Residues His-74 and Asp-121 each act as charge relay system in the active site. An N-linked (GlcNAc...) asparagine glycan is attached at Asn-132. 3 disulfide bridges follow: Cys-155/Cys-230, Cys-188/Cys-211, and Cys-220/Cys-248. Ser-224 serves as the catalytic Charge relay system. The N-linked (GlcNAc...) asparagine glycan is linked to Asn-233.

The protein belongs to the peptidase S1 family. Tryptase subfamily. As to quaternary structure, homotetramer.

Its subcellular location is the secreted. It catalyses the reaction Preferential cleavage: Arg-|-Xaa, Lys-|-Xaa, but with more restricted specificity than trypsin.. Functionally, tryptase is the major neutral protease present in mast cells and is secreted upon the coupled activation-degranulation response of this cell type. The polypeptide is Tryptase (MCT7) (Sus scrofa (Pig)).